The chain runs to 139 residues: Large ribosomal subunit protein bL21 (139 aa).

Belongs to the bacterial ribosomal protein bL21 family. As to quaternary structure, part of the 50S ribosomal subunit. Contacts protein L20.

Functionally, this protein binds to 23S rRNA in the presence of protein L20. The protein is Large ribosomal subunit protein bL21 of Prochlorococcus marinus (strain NATL2A).